Consider the following 370-residue polypeptide: Dual-specificity RNA methyltransferase RlmN (370 aa).

The active-site Proton acceptor is glutamate 93. The region spanning glutamate 99–aspartate 337 is the Radical SAM core domain. Residues cysteine 106 and cysteine 343 are joined by a disulfide bond. Residues cysteine 113, cysteine 117, and cysteine 120 each coordinate [4Fe-4S] cluster. Residues glycine 167–glutamate 168, serine 199, serine 221–histidine 223, and asparagine 300 contribute to the S-adenosyl-L-methionine site. The active-site S-methylcysteine intermediate is the cysteine 343.

This sequence belongs to the radical SAM superfamily. RlmN family. It depends on [4Fe-4S] cluster as a cofactor.

It is found in the cytoplasm. The catalysed reaction is adenosine(2503) in 23S rRNA + 2 reduced [2Fe-2S]-[ferredoxin] + 2 S-adenosyl-L-methionine = 2-methyladenosine(2503) in 23S rRNA + 5'-deoxyadenosine + L-methionine + 2 oxidized [2Fe-2S]-[ferredoxin] + S-adenosyl-L-homocysteine. It carries out the reaction adenosine(37) in tRNA + 2 reduced [2Fe-2S]-[ferredoxin] + 2 S-adenosyl-L-methionine = 2-methyladenosine(37) in tRNA + 5'-deoxyadenosine + L-methionine + 2 oxidized [2Fe-2S]-[ferredoxin] + S-adenosyl-L-homocysteine. Its function is as follows. Specifically methylates position 2 of adenine 2503 in 23S rRNA and position 2 of adenine 37 in tRNAs. m2A2503 modification seems to play a crucial role in the proofreading step occurring at the peptidyl transferase center and thus would serve to optimize ribosomal fidelity. This chain is Dual-specificity RNA methyltransferase RlmN, found in Francisella philomiragia subsp. philomiragia (strain ATCC 25017 / CCUG 19701 / FSC 153 / O#319-036).